The following is a 460-amino-acid chain: Light-independent protochlorophyllide reductase subunit N (460 aa).

Residues Cys-22, Cys-47, and Cys-107 each contribute to the [4Fe-4S] cluster site.

This sequence belongs to the BchN/ChlN family. In terms of assembly, protochlorophyllide reductase is composed of three subunits; ChlL, ChlN and ChlB. Forms a heterotetramer of two ChlB and two ChlN subunits. It depends on [4Fe-4S] cluster as a cofactor.

It carries out the reaction chlorophyllide a + oxidized 2[4Fe-4S]-[ferredoxin] + 2 ADP + 2 phosphate = protochlorophyllide a + reduced 2[4Fe-4S]-[ferredoxin] + 2 ATP + 2 H2O. Its pathway is porphyrin-containing compound metabolism; chlorophyll biosynthesis (light-independent). Its function is as follows. Component of the dark-operative protochlorophyllide reductase (DPOR) that uses Mg-ATP and reduced ferredoxin to reduce ring D of protochlorophyllide (Pchlide) to form chlorophyllide a (Chlide). This reaction is light-independent. The NB-protein (ChlN-ChlB) is the catalytic component of the complex. This is Light-independent protochlorophyllide reductase subunit N from Thermosynechococcus vestitus (strain NIES-2133 / IAM M-273 / BP-1).